We begin with the raw amino-acid sequence, 172 residues long: Trypsin inhibitor DE-3 (172 aa).

2 disulfide bridges follow: Cys39/Cys83 and Cys132/Cys139.

It belongs to the protease inhibitor I3 (leguminous Kunitz-type inhibitor) family.

Functionally, inhibition of trypsin. The chain is Trypsin inhibitor DE-3 from Erythrina variegata (Indian coral tree).